The primary structure comprises 318 residues: D-alanine--D-alanine ligase B (318 aa).

One can recognise an ATP-grasp domain in the interval K116 to A311. Residue S142–T197 coordinates ATP. The Mg(2+) site is built by D265, E278, and N280.

This sequence belongs to the D-alanine--D-alanine ligase family. It depends on Mg(2+) as a cofactor. Mn(2+) is required as a cofactor.

It localises to the cytoplasm. It catalyses the reaction 2 D-alanine + ATP = D-alanyl-D-alanine + ADP + phosphate + H(+). The protein operates within cell wall biogenesis; peptidoglycan biosynthesis. Cell wall formation. This is D-alanine--D-alanine ligase B from Pseudomonas putida (strain ATCC 47054 / DSM 6125 / CFBP 8728 / NCIMB 11950 / KT2440).